The sequence spans 307 residues: Mycothiol acetyltransferase (307 aa).

2 N-acetyltransferase domains span residues 12–157 and 160–307; these read TRTD…PPLP and VTLR…YQLG. Glu-43 serves as a coordination point for 1D-myo-inositol 2-(L-cysteinylamino)-2-deoxy-alpha-D-glucopyranoside. 87–89 is an acetyl-CoA binding site; it reads LAV. Positions 187, 227, and 239 each coordinate 1D-myo-inositol 2-(L-cysteinylamino)-2-deoxy-alpha-D-glucopyranoside. Acetyl-CoA contacts are provided by residues 243–245 and 250–256; these read LGV and HGGGLGK. Tyr-278 is a binding site for 1D-myo-inositol 2-(L-cysteinylamino)-2-deoxy-alpha-D-glucopyranoside.

This sequence belongs to the acetyltransferase family. MshD subfamily. In terms of assembly, monomer.

It carries out the reaction 1D-myo-inositol 2-(L-cysteinylamino)-2-deoxy-alpha-D-glucopyranoside + acetyl-CoA = mycothiol + CoA + H(+). Functionally, catalyzes the transfer of acetyl from acetyl-CoA to desacetylmycothiol (Cys-GlcN-Ins) to form mycothiol. In Salinispora tropica (strain ATCC BAA-916 / DSM 44818 / JCM 13857 / NBRC 105044 / CNB-440), this protein is Mycothiol acetyltransferase.